The chain runs to 345 residues: MSTPAYLTKLESIPKEKFLFGPSPISYLPNLTAVLGGKVKLYAKREDCNSGLAYGGNKVRKLEYLVADAKAKGCNTLVSVGGVQSNHTRAVTAVAVASGLKAVTVQEKWVPIDPPLYSETGNILLSRLMGGDVRLNQETFDIRHKKATEDAFKDVEAKGGKPYYIPAGASDHPLGGLGFTNWVVELAKQEKELGVFFDVVIVCSVTGSSHAGTVVGAVAEGRKRKIIGIDASGKPEATRNQVLKIARNTAALLDERLEIKEEDVILDDRFHAGIYGIPDDETIAAMKLAAQTDAFITDPVYEGKSMAGMIRLVKEGAIKEGSNVLYIHLGGQPALNAYSSYFPHA.

An N6-(pyridoxal phosphate)lysine modification is found at lysine 58. Serine 85 functions as the Nucleophile in the catalytic mechanism.

It belongs to the ACC deaminase/D-cysteine desulfhydrase family. It depends on pyridoxal 5'-phosphate as a cofactor.

It catalyses the reaction 1-aminocyclopropane-1-carboxylate + H2O = 2-oxobutanoate + NH4(+). Catalyzes a cyclopropane ring-opening reaction, the irreversible conversion of 1-aminocyclopropane-1-carboxylate (ACC) to ammonia and alpha-ketobutyrate. The protein is Probable 1-aminocyclopropane-1-carboxylate deaminase of Cryptococcus neoformans var. neoformans serotype D (strain JEC21 / ATCC MYA-565) (Filobasidiella neoformans).